Consider the following 921-residue polypeptide: cGMP-dependent 3',5'-cyclic phosphodiesterase (921 aa).

At M1 the chain carries N-acetylmethionine. Disordered regions lie at residues 1–21 (MRRQ…PPGS) and 177–198 (ESSV…DQKG). The segment covering 177–188 (ESSVAPEATQNP) has biased composition (polar residues). 2 GAF domains span residues 220–357 (DASS…STVL) and 389–528 (DVSV…GISI). S411, D426, I445, Y468, and T479 together coordinate 3',5'-cyclic GMP. The PDEase domain maps to 558 to 882 (SDDEYTKLLH…EHWTKVSHKF (325 aa)). The active-site Proton donor is H636. 4 residues coordinate Zn(2+): H640, H676, D677, and D788. D677 is a Mg(2+) binding site.

This sequence belongs to the cyclic nucleotide phosphodiesterase family. PDE2 subfamily. In terms of assembly, homodimer. The cofactor is Zn(2+). Requires Mg(2+) as cofactor.

It localises to the cell membrane. The protein resides in the cytoplasm. Its subcellular location is the mitochondrion. The protein localises to the mitochondrion inner membrane. It is found in the mitochondrion outer membrane. The enzyme catalyses a nucleoside 3',5'-cyclic phosphate + H2O = a nucleoside 5'-phosphate + H(+). It carries out the reaction 3',5'-cyclic GMP + H2O = GMP + H(+). The catalysed reaction is 3',5'-cyclic AMP + H2O = AMP + H(+). With respect to regulation, the 3',5'-cyclic-AMP phosphodiesterase activity is stimulated by 3',5'-cyclic GMP. Functionally, cGMP-activated cyclic nucleotide phosphodiesterase with a dual-specificity for the second messengers cAMP and cGMP, which are key regulators of many important physiological processes. Has a higher efficiency with cGMP compared to cAMP. Plays a role in cell growth and migration. In terms of biological role, regulates mitochondrial cAMP levels and respiration. Involved in the regulation of mitochondria morphology/dynamics and apoptotic cell death via local modulation of cAMP/PKA signaling in the mitochondrion, including the monitoring of local cAMP levels at the outer mitochondrial membrane and of PKA-dependent phosphorylation of DNM1L. In Bos taurus (Bovine), this protein is cGMP-dependent 3',5'-cyclic phosphodiesterase.